The sequence spans 534 residues: Origin of replication complex subunit 5 (534 aa).

A disordered region spans residues 1-36; the sequence is MPPKEESSKVTRRSTRSSASVTVENSEPIESHTPTI. 83–90 serves as a coordination point for ATP; that stretch reads GGASTGKT. A Nuclear localization signal motif is present at residues 129 to 136; the sequence is HRKCSLNG. Residues 397-428 are disordered; that stretch reads MFDSTGGMDNRKRKRKASEKSMEKKEIAEQEA. A compositionally biased stretch (basic and acidic residues) spans 414–424; it reads SEKSMEKKEIA.

The protein belongs to the ORC5 family. In terms of assembly, component of the origin recognition complex (ORC) composed of at least ORC1 (ORC1A or ORC1B), ORC2, ORC3, ORC4, ORC5 and ORC6. ORC is regulated in a cell-cycle and development dependent manner. It is sequentially assembled at the exit from anaphase of mitosis and disassembled as cells enter S phase. Interacts directly with ORC1A, ORC1B, ORC2, ORC3, ORC4 and ORC6. Follow a cell-cycle regulation with a peak at the G1/S-phase. Mostly expressed in flower buds and cauline leaves, and, to a lower exent, in roots, leaves and stems. Expressed at low levels ubiquitously.

It is found in the nucleus. Functionally, component of the origin recognition complex (ORC) that binds origins of replication. DNA-binding is ATP-dependent. The specific DNA sequences that define origins of replication have not been identified yet. ORC is required to assemble the pre-replication complex necessary to initiate DNA replication. This chain is Origin of replication complex subunit 5, found in Arabidopsis thaliana (Mouse-ear cress).